The sequence spans 494 residues: MATFKDACFHYRRVTKLNRELLRIGANSVWTPVSSNKIKIKGWCIECCQLTGLTFCHGCSLAHVCQWCIQNKRCFLDNEPHLLKLRTFESPITKEKLQCIINLYELLFPINHGVINKFKKTIKQRKCRNEFDKSWYNQLLLPITLNAAVFKFHSRDVYVFGFYEGSSPCIDLPYRLVNCIDLYDKLLLDQVNFERMSSLPDNLQSIYANKYFKLSRLPSMKLKRIYYSDFSKQNLINKYKTKSRIVLRNLTEFTWDSQTDLHHDLINDKDKILAALSTSSLKQFETHDLNLGRIKADIFELGHHCKPNYISSNHWQPASKISKCKWCNVKYAFRDMDWKMESMYNELLSFIQSCYKSNVNVGHCSSIEKAYPLVKDILWHSITEYIDQTVEKLFNTMNPVQVNEQQVIKFCWQIDIALYMHIKMILETEALPFTFTLNQFNSIIKGIVNQWCDVAELDHLPLCTEQTDALVKLEEEGKLSEEYELLISDSEDDD.

The interval 1-83 is RNA-binding; sequence MATFKDACFH…CFLDNEPHLL (83 aa). Residues 44–81 are zinc-binding domain; it reads CIECCQLTGLTFCHGCSLAHVCQWCIQNKRCFLDNEPH. The segment at 84 to 178 is important for cytoskeleton localization; that stretch reads KLRTFESPIT…CIDLPYRLVN (95 aa). The interval 320–494 is interaction with host IRF3; the sequence is KISKCKWCNV…LLISDSEDDD (175 aa). The short motif at 485–488 is the pLxIS motif element; sequence LLIS.

It belongs to the rotavirus NSP1 family. As to quaternary structure, interacts (via C-terminus) with host IRF3; this interaction leads to IRF3 degradation. Interacts with host IRF7; this interaction leads to IRF7 degradation. Interacts with host CUL1 and CUL3.

The protein resides in the host cytoplasm. Its subcellular location is the host cytoskeleton. Its function is as follows. Plays a role in the inhibition of host innate immunity by inducing the degradation of key host factors required to activate interferon production such as IRF3, IRF5 or IRF7. Associates with components of cullin RING ligases (CRLs) including CUL1 or CUL3, which are essential multisubunit ubiquitination complexes, to modulate their activities. This chain is Non-structural protein 1, found in Rotavirus A (strain RVA/Monkey/United States/RRV/1975/G3P5B[3]) (RV-A).